A 204-amino-acid chain; its full sequence is Ras-related protein RABG1 (204 aa).

12–19 provides a ligand contact to GTP; the sequence is GDSGVGKT. The short motif at 34 to 42 is the Effector region element; that stretch reads HNSTIYVDL. Residues 60–64, 122–125, and 155–156 contribute to the GTP site; these read DTAGQ, NKTD, and SA. S-geranylgeranyl cysteine attachment occurs at residues Cys-202 and Cys-204. Cys-204 is modified (cysteine methyl ester).

The protein belongs to the small GTPase superfamily. Rab family.

The protein resides in the cell membrane. In terms of biological role, intracellular vesicle trafficking and protein transport. The protein is Ras-related protein RABG1 (RABG1) of Arabidopsis thaliana (Mouse-ear cress).